An 828-amino-acid polypeptide reads, in one-letter code: MKTTMAAAATCLVALLVVVLAEAAGVGCTTVAYNDRSLVIDGERRIIISGSIHYPRSTPEMWPDLIKKAKEGGLDAIETYVFWNGHEPHRRQYNFEGNYDIIRFFKEIQNAGLYAILRIGPYICGEWNYGGLPAWLRDIPQMQFRMHNAPFENEMENFTTLIINKMKDANMFAGQGGPIILAQIENEYGNVMGQLNNNQSASEYIHWCADMANKQNVGVPWIMCQQDSDVPHNVVNTCNGFYCHDWFPNRTGIPKIWTENWTGWFKAWDKPDFHRSAEDIAFAVAMFFQKRGSLQNYYMYHGGTNFGRTSGGPYITTSYDYDAPLDEYGNLRQPKYGHLKDLHSVIKSIEKILVHGEYVDANYSDNVTVTKYTLGSTSACFINNRNDNKDLNVTLDGNTHLLPAWSVSILPDCKTVAFNSAKIKAQTTIMVKKANMVEKEPESLKWSWMRENLTPFMTDEKGSYRKNELLEQIVTSTDQSDYLWYRTSLDHKGEASYTLFVNTTGHELYAFVNGMLVGKNHSPNGHFVFQLESAVKLHDGKNYISLLSATIGLKNYGPLFEKMPAGIVGGPVKLIDNNGTGIDLSNSSWSYKAGLAGEYRQIHLDKPGYRWDNNNGTVPINRPFTWYKTTFQAPAGQDTVVVDLLGLNKGVAWVNGNNLGRYWPSYTAAEMGGCHHCDYRGVFQAEGDGQKCLTGCGEPSQRYYHVPRSFLKNGEPNTLILFEEAGGDPSQVIFHSVVAGSVCVSAEVGDAITLSCGQHSKTISTIDVTSFGVARGQCGAYEGGCESKAAYKAFTEACLGKESCTVQIINALTGSGCLSGVLTVQASC.

A signal peptide spans 1–23 (MKTTMAAAATCLVALLVVVLAEA). The N-linked (GlcNAc...) asparagine glycan is linked to Asn-157. The active-site Proton donor is the Glu-187. Residues Asn-198 and Asn-249 are each glycosylated (N-linked (GlcNAc...) asparagine). Glu-259 serves as the catalytic Nucleophile. Asn-260, Asn-362, Asn-366, Asn-392, Asn-502, Asn-578, Asn-586, and Asn-615 each carry an N-linked (GlcNAc...) asparagine glycan. One can recognise an SUEL-type lectin domain in the interval 746-828 (AEVGDAITLS…SGVLTVQASC (83 aa)).

The protein belongs to the glycosyl hydrolase 35 family.

It localises to the secreted. The protein resides in the extracellular space. It is found in the apoplast. The catalysed reaction is Hydrolysis of terminal non-reducing beta-D-galactose residues in beta-D-galactosides.. This chain is Beta-galactosidase 13, found in Oryza sativa subsp. japonica (Rice).